The primary structure comprises 596 residues: Transketolase-like protein 1 (596 aa).

His-46 serves as a coordination point for substrate. Residues Ser-49 and 94 to 96 (GWL) each bind thiamine diphosphate. Asp-126 is a binding site for Mg(2+). Val-127 and Asn-156 together coordinate thiamine diphosphate. Asn-156 and Leu-158 together coordinate Mg(2+). Positions 218 and 232 each coordinate thiamine diphosphate. Residues His-232, Arg-292, and Ser-319 each contribute to the substrate site. The thiamine diphosphate site is built by Glu-340 and Phe-366. Catalysis depends on Glu-340, which acts as the Proton donor. The substrate site is built by His-390 and Asp-398. Residue Gln-402 coordinates thiamine diphosphate. Arg-448 serves as a coordination point for substrate.

Belongs to the transketolase family. Homodimer. Mg(2+) is required as a cofactor. Ca(2+) serves as cofactor. The cofactor is Mn(2+). It depends on Co(2+) as a cofactor. Requires thiamine diphosphate as cofactor.

The protein localises to the cytoplasm. The catalysed reaction is D-sedoheptulose 7-phosphate + D-glyceraldehyde 3-phosphate = aldehydo-D-ribose 5-phosphate + D-xylulose 5-phosphate. Functionally, catalyzes the transfer of a two-carbon ketol group from a ketose donor to an aldose acceptor, via a covalent intermediate with the cofactor thiamine pyrophosphate. The sequence is that of Transketolase-like protein 1 (TKTL1) from Bos taurus (Bovine).